The primary structure comprises 294 residues: uncharacterized protein (294 aa).

Residues 181 to 204 (DEPFPTTKNHNNDKRETNDKDDQQ) form a disordered region. The segment covering 190-204 (HNNDKRETNDKDDQQ) has biased composition (basic and acidic residues).

This sequence belongs to the IIV-6 391R family.

This is an uncharacterized protein from Acheta domesticus (House cricket).